The sequence spans 102 residues: uncharacterized protein (102 aa).

2 consecutive transmembrane segments (helical) span residues 21 to 43 and 58 to 80; these read FSSS…TPVF and SFAV…YFFC.

It localises to the membrane. This is an uncharacterized protein from Saccharomyces cerevisiae (strain ATCC 204508 / S288c) (Baker's yeast).